The chain runs to 676 residues: UvrABC system protein B (676 aa).

Residues 26-414 (EGLDAGLAHQ…SAGEIADQVV (389 aa)) enclose the Helicase ATP-binding domain. 39 to 46 (GVTGSGKT) is an ATP binding site. Residues 92-115 (YYDYYQPEAYVPTTDTFIEKDASV) carry the Beta-hairpin motif. A Helicase C-terminal domain is found at 432–598 (QVDDLLSEIR…ALKRNIKDIM (167 aa)). The region spanning 636–671 (EKEISRLEAAMYQHAQDLEFELAAEKRDEIEKLRAQ) is the UVR domain.

This sequence belongs to the UvrB family. In terms of assembly, forms a heterotetramer with UvrA during the search for lesions. Interacts with UvrC in an incision complex.

It localises to the cytoplasm. Its function is as follows. The UvrABC repair system catalyzes the recognition and processing of DNA lesions. A damage recognition complex composed of 2 UvrA and 2 UvrB subunits scans DNA for abnormalities. Upon binding of the UvrA(2)B(2) complex to a putative damaged site, the DNA wraps around one UvrB monomer. DNA wrap is dependent on ATP binding by UvrB and probably causes local melting of the DNA helix, facilitating insertion of UvrB beta-hairpin between the DNA strands. Then UvrB probes one DNA strand for the presence of a lesion. If a lesion is found the UvrA subunits dissociate and the UvrB-DNA preincision complex is formed. This complex is subsequently bound by UvrC and the second UvrB is released. If no lesion is found, the DNA wraps around the other UvrB subunit that will check the other stand for damage. This chain is UvrABC system protein B, found in Vibrio parahaemolyticus serotype O3:K6 (strain RIMD 2210633).